The sequence spans 444 residues: Spermidine/putrescine import ATP-binding protein PotA (444 aa).

Positions 11–332 constitute an ABC transporter domain; that stretch reads ISLVDVDKEF…PVNKWVANFI (322 aa). Residue 43–50 participates in ATP binding; sequence GPSGSGKT. Positions 111–201 are insert; the sequence is RIKKKAEEIP…ESFKKKYLTR (91 aa).

It belongs to the ABC transporter superfamily. Spermidine/putrescine importer (TC 3.A.1.11.1) family. The complex is composed of two ATP-binding proteins (PotA), two transmembrane proteins (PotB and PotC) and a solute-binding protein (PotD).

It is found in the cell membrane. The catalysed reaction is ATP + H2O + polyamine-[polyamine-binding protein]Side 1 = ADP + phosphate + polyamineSide 2 + [polyamine-binding protein]Side 1.. Its function is as follows. Part of the ABC transporter complex PotABCD involved in spermidine/putrescine import. Responsible for energy coupling to the transport system. In Mesomycoplasma hyopneumoniae (strain J / ATCC 25934 / NCTC 10110) (Mycoplasma hyopneumoniae), this protein is Spermidine/putrescine import ATP-binding protein PotA.